The sequence spans 256 residues: GTP cyclohydrolase FolE2 (256 aa).

This sequence belongs to the GTP cyclohydrolase IV family.

The catalysed reaction is GTP + H2O = 7,8-dihydroneopterin 3'-triphosphate + formate + H(+). The protein operates within cofactor biosynthesis; 7,8-dihydroneopterin triphosphate biosynthesis; 7,8-dihydroneopterin triphosphate from GTP: step 1/1. Converts GTP to 7,8-dihydroneopterin triphosphate. This is GTP cyclohydrolase FolE2 from Caldicellulosiruptor saccharolyticus (strain ATCC 43494 / DSM 8903 / Tp8T 6331).